Consider the following 706-residue polypeptide: Glycine--tRNA ligase beta subunit (706 aa).

Belongs to the class-II aminoacyl-tRNA synthetase family. In terms of assembly, tetramer of two alpha and two beta subunits.

It is found in the cytoplasm. The catalysed reaction is tRNA(Gly) + glycine + ATP = glycyl-tRNA(Gly) + AMP + diphosphate. This Hyphomonas neptunium (strain ATCC 15444) protein is Glycine--tRNA ligase beta subunit.